The following is a 632-amino-acid chain: MAU2 chromatid cohesion factor homolog (632 aa).

TPR repeat units follow at residues 453–486 (GGFYYVQGLHAFHKNSFHEAKRFLRETLKMANAE) and 493–526 (SCSLVLLSHVFLSIGNSKESMNMVTPAMQLASKI).

Belongs to the SCC4/mau-2 family. As to quaternary structure, interacts with Nipped-B to form the cohesin loading complex.

It is found in the nucleus. The protein resides in the nucleoplasm. Required for association of the cohesin complex with chromatin during interphase. Plays a role in sister chromatid cohesion and normal progression through prometaphase. This chain is MAU2 chromatid cohesion factor homolog, found in Drosophila erecta (Fruit fly).